Consider the following 272-residue polypeptide: Imidazole glycerol phosphate synthase subunit HisF (272 aa).

Active-site residues include Asp-11 and Asp-130.

Belongs to the HisA/HisF family. As to quaternary structure, heterodimer of HisH and HisF.

Its subcellular location is the cytoplasm. The catalysed reaction is 5-[(5-phospho-1-deoxy-D-ribulos-1-ylimino)methylamino]-1-(5-phospho-beta-D-ribosyl)imidazole-4-carboxamide + L-glutamine = D-erythro-1-(imidazol-4-yl)glycerol 3-phosphate + 5-amino-1-(5-phospho-beta-D-ribosyl)imidazole-4-carboxamide + L-glutamate + H(+). The protein operates within amino-acid biosynthesis; L-histidine biosynthesis; L-histidine from 5-phospho-alpha-D-ribose 1-diphosphate: step 5/9. In terms of biological role, IGPS catalyzes the conversion of PRFAR and glutamine to IGP, AICAR and glutamate. The HisF subunit catalyzes the cyclization activity that produces IGP and AICAR from PRFAR using the ammonia provided by the HisH subunit. In Methanococcus maripaludis (strain C6 / ATCC BAA-1332), this protein is Imidazole glycerol phosphate synthase subunit HisF.